Consider the following 182-residue polypeptide: ATP synthase subunit b, chloroplastic (182 aa).

A helical transmembrane segment spans residues 33–51 (VLNIAILLSGVIYLGRNFL).

The protein belongs to the ATPase B chain family. F-type ATPases have 2 components, F(1) - the catalytic core - and F(0) - the membrane proton channel. F(1) has five subunits: alpha(3), beta(3), gamma(1), delta(1), epsilon(1). F(0) has four main subunits: a(1), b(1), b'(1) and c(10-14). The alpha and beta chains form an alternating ring which encloses part of the gamma chain. F(1) is attached to F(0) by a central stalk formed by the gamma and epsilon chains, while a peripheral stalk is formed by the delta, b and b' chains.

Its subcellular location is the plastid. It is found in the chloroplast thylakoid membrane. In terms of biological role, f(1)F(0) ATP synthase produces ATP from ADP in the presence of a proton or sodium gradient. F-type ATPases consist of two structural domains, F(1) containing the extramembraneous catalytic core and F(0) containing the membrane proton channel, linked together by a central stalk and a peripheral stalk. During catalysis, ATP synthesis in the catalytic domain of F(1) is coupled via a rotary mechanism of the central stalk subunits to proton translocation. Component of the F(0) channel, it forms part of the peripheral stalk, linking F(1) to F(0). In Guillardia theta (Cryptophyte), this protein is ATP synthase subunit b, chloroplastic.